Here is a 273-residue protein sequence, read N- to C-terminus: tRNA pseudouridine synthase B (273 aa).

Asp38 functions as the Nucleophile in the catalytic mechanism.

It belongs to the pseudouridine synthase TruB family. Type 1 subfamily.

It catalyses the reaction uridine(55) in tRNA = pseudouridine(55) in tRNA. In terms of biological role, responsible for synthesis of pseudouridine from uracil-55 in the psi GC loop of transfer RNAs. The protein is tRNA pseudouridine synthase B of Campylobacter concisus (strain 13826).